A 612-amino-acid polypeptide reads, in one-letter code: 1,8-cineole synthase, chloroplastic (612 aa).

Residues 1-52 (MALVCGAPLASRSCLNKSLISSTHELKPLRRTILPTLRWKSATPSINMCLTT) constitute a chloroplast transit peptide. Residues Asp363, Asp367, and Asp515 each contribute to the Mg(2+) site. The DDXXD motif motif lies at 363 to 367 (DDIYD).

The protein belongs to the terpene synthase family. Tpsd subfamily. It depends on Mg(2+) as a cofactor. The cofactor is Mn(2+).

The protein resides in the plastid. Its subcellular location is the chloroplast. It carries out the reaction (2E)-geranyl diphosphate + H2O = 1,8-cineole + diphosphate. The protein operates within terpene metabolism; oleoresin biosynthesis. Functionally, terpene synthase (TPS) involved in the biosynthesis of monoterpene natural products included in conifer oleoresin secretions and volatile emissions; these compounds contribute to biotic and abiotic stress defense against herbivores and pathogens. Catalyzes the conversion of (2E)-geranyl diphosphate (GPP) to 1,8-cineole. The protein is 1,8-cineole synthase, chloroplastic of Picea glauca (White spruce).